The sequence spans 444 residues: Phosphoribosylamine--glycine ligase (444 aa).

An ATP-grasp domain is found at 109–324 (RNLFKKYEID…FLDVCFAIAE (216 aa)). Residue 140-202 (MTSLGKDVVV…EEKLVGVEFT (63 aa)) coordinates ATP. 3 residues coordinate Mg(2+): glutamine 282, glutamate 294, and asparagine 296. Residues glutamine 282, glutamate 294, and asparagine 296 each contribute to the Mn(2+) site.

Belongs to the GARS family. It depends on Mg(2+) as a cofactor. Mn(2+) serves as cofactor.

The catalysed reaction is 5-phospho-beta-D-ribosylamine + glycine + ATP = N(1)-(5-phospho-beta-D-ribosyl)glycinamide + ADP + phosphate + H(+). It participates in purine metabolism; IMP biosynthesis via de novo pathway; N(1)-(5-phospho-D-ribosyl)glycinamide from 5-phospho-alpha-D-ribose 1-diphosphate: step 2/2. The protein is Phosphoribosylamine--glycine ligase of Methanococcus maripaludis (strain C5 / ATCC BAA-1333).